A 234-amino-acid polypeptide reads, in one-letter code: Sugar fermentation stimulation protein homolog (234 aa).

This sequence belongs to the SfsA family.

This Pectobacterium atrosepticum (strain SCRI 1043 / ATCC BAA-672) (Erwinia carotovora subsp. atroseptica) protein is Sugar fermentation stimulation protein homolog.